Here is a 187-residue protein sequence, read N- to C-terminus: Rusticyanin (187 aa).

The first 32 residues, 1–32, serve as a signal peptide directing secretion; it reads MYTQNTMKKNWYVTVGAAAALAATVGMGTAMA. A Plastocyanin-like domain is found at 85–187; that stretch reads SFEVHDKKNP…TGMFGKIIVK (103 aa). Cu cation contacts are provided by His117, Cys170, His175, and Met180.

In terms of assembly, monomer. The cofactor is Cu cation.

Its subcellular location is the periplasm. In terms of biological role, electron carrier from cytochrome c552 to the A-type oxidase. The polypeptide is Rusticyanin (rus) (Acidithiobacillus ferridurans).